Consider the following 494-residue polypeptide: Putative NAD kinase 3 (494 aa).

This sequence belongs to the NAD kinase family.

It carries out the reaction NAD(+) + ATP = ADP + NADP(+) + H(+). This is Putative NAD kinase 3 from Oryza sativa subsp. japonica (Rice).